The sequence spans 543 residues: Chaperonin GroEL (543 aa).

ATP contacts are provided by residues 29–32 (TLGP), 86–90 (DGTTT), glycine 413, 478–480 (NAA), and aspartate 494.

Belongs to the chaperonin (HSP60) family. As to quaternary structure, forms a cylinder of 14 subunits composed of two heptameric rings stacked back-to-back. Interacts with the co-chaperonin GroES.

It is found in the cytoplasm. It carries out the reaction ATP + H2O + a folded polypeptide = ADP + phosphate + an unfolded polypeptide.. In terms of biological role, together with its co-chaperonin GroES, plays an essential role in assisting protein folding. The GroEL-GroES system forms a nano-cage that allows encapsulation of the non-native substrate proteins and provides a physical environment optimized to promote and accelerate protein folding. This chain is Chaperonin GroEL, found in Lactobacillus gasseri (strain ATCC 33323 / DSM 20243 / BCRC 14619 / CIP 102991 / JCM 1131 / KCTC 3163 / NCIMB 11718 / NCTC 13722 / AM63).